Reading from the N-terminus, the 182-residue chain is Putative manganese efflux pump MntP (182 aa).

6 helical membrane passes run 6–26 (LIPL…VSLG), 37–57 (ILYI…IGMV), 71–91 (HFAG…SSIL), 101–121 (IGIS…SVGL), 131–151 (IITI…GLFI), and 162–182 (YGEI…LFPI).

Belongs to the MntP (TC 9.B.29) family.

The protein resides in the cell membrane. In terms of biological role, probably functions as a manganese efflux pump. This chain is Putative manganese efflux pump MntP, found in Bacillus cereus (strain ATCC 10987 / NRS 248).